We begin with the raw amino-acid sequence, 223 residues long: Noggin (223 aa).

Positions 1-26 (MDPPRLRVATYLLLLSVGLLLHGGAC) are cleaved as a signal peptide. Asparagine 61 carries N-linked (GlcNAc...) asparagine glycosylation. Cystine bridges form between cysteine 143–cysteine 180, cysteine 166–cysteine 217, cysteine 172–cysteine 219, and cysteine 195–cysteine 204.

This sequence belongs to the noggin family. Homodimer.

The protein localises to the secreted. Its function is as follows. Inhibitor of bone morphogenetic proteins (BMP) signaling. This chain is Noggin (nog), found in Takifugu rubripes (Japanese pufferfish).